Consider the following 135-residue polypeptide: ATP synthase epsilon chain (135 aa).

It belongs to the ATPase epsilon chain family. F-type ATPases have 2 components, CF(1) - the catalytic core - and CF(0) - the membrane proton channel. CF(1) has five subunits: alpha(3), beta(3), gamma(1), delta(1), epsilon(1). CF(0) has three main subunits: a, b and c.

It localises to the cell inner membrane. Its function is as follows. Produces ATP from ADP in the presence of a proton gradient across the membrane. The chain is ATP synthase epsilon chain from Mesorhizobium japonicum (strain LMG 29417 / CECT 9101 / MAFF 303099) (Mesorhizobium loti (strain MAFF 303099)).